We begin with the raw amino-acid sequence, 261 residues long: Proteasome assembly chaperone 2 (261 aa).

This sequence belongs to the PSMG2 family. Forms a heterodimer with psmg1. Degraded by the proteasome upon completion of 20S proteasome maturation.

Its subcellular location is the nucleus. Chaperone protein which promotes assembly of the 20S proteasome as part of a heterodimer with psmg1. The protein is Proteasome assembly chaperone 2 of Xenopus tropicalis (Western clawed frog).